The following is a 919-amino-acid chain: UPF0182 protein Tery_4385 (919 aa).

7 helical membrane-spanning segments follow: residues 6 to 26 (YIIIAISVILLVVFSLSRTLV), 52 to 72 (IFLWVGAFVIYFLFLWSNYWI), 96 to 116 (IFVKIIFLVNITLISLSAATA), 160 to 180 (WLFTLVFAGLIISIIVYALKG), 198 to 218 (THISLLLAGVTILIAVGFWFE), 243 to 263 (FAYWAMAIVALLLAVVCVLSV), and 268 to 288 (IIWPTYGIVIYIVLLGLFNVL).

Belongs to the UPF0182 family.

It localises to the cell membrane. This Trichodesmium erythraeum (strain IMS101) protein is UPF0182 protein Tery_4385.